The following is a 256-amino-acid chain: Thiazole synthase (256 aa).

Catalysis depends on lysine 96, which acts as the Schiff-base intermediate with DXP. 1-deoxy-D-xylulose 5-phosphate-binding positions include glycine 157, 184 to 185, and 206 to 207; these read AG and NT.

This sequence belongs to the ThiG family. As to quaternary structure, homotetramer. Forms heterodimers with either ThiH or ThiS.

The protein resides in the cytoplasm. It catalyses the reaction [ThiS sulfur-carrier protein]-C-terminal-Gly-aminoethanethioate + 2-iminoacetate + 1-deoxy-D-xylulose 5-phosphate = [ThiS sulfur-carrier protein]-C-terminal Gly-Gly + 2-[(2R,5Z)-2-carboxy-4-methylthiazol-5(2H)-ylidene]ethyl phosphate + 2 H2O + H(+). It functions in the pathway cofactor biosynthesis; thiamine diphosphate biosynthesis. In terms of biological role, catalyzes the rearrangement of 1-deoxy-D-xylulose 5-phosphate (DXP) to produce the thiazole phosphate moiety of thiamine. Sulfur is provided by the thiocarboxylate moiety of the carrier protein ThiS. In vitro, sulfur can be provided by H(2)S. The polypeptide is Thiazole synthase (Bartonella tribocorum (strain CIP 105476 / IBS 506)).